A 152-amino-acid polypeptide reads, in one-letter code: Syntaxin-8A (152 aa).

Over residues 1-14 (MNNNNNFNSNFNSN) the composition is skewed to low complexity. The tract at residues 1–22 (MNNNNNFNSNFNSNRISSTQPY) is disordered. At 1 to 131 (MNNNNNFNSN…LTQQSKTTGY (131 aa)) the chain is on the cytoplasmic side. The region spanning 60–122 (KRDMEEQDKM…RNTTKNLITL (63 aa)) is the t-SNARE coiled-coil homology domain. The chain crosses the membrane as a helical; Anchor for type IV membrane protein span at residues 132-152 (CSAICFLLLVLLVIIILASVL).

This sequence belongs to the syntaxin family. In terms of assembly, component of the SNARE complex composed of syn7A, syn8A, vamp7A and vti1A.

It is found in the endosome membrane. Functionally, involved in the targeting and/or fusion of transport vesicles to their target membrane during transport of proteins from the early endosome to the lysosome. Required for fusion of late endosomes with lysosomes and homotypic lysosomal fusion. This Dictyostelium discoideum (Social amoeba) protein is Syntaxin-8A.